Here is a 314-residue protein sequence, read N- to C-terminus: Beta-ketoacyl-[acyl-carrier-protein] synthase III (314 aa).

Residues C112 and H241 contribute to the active site. The ACP-binding stretch occupies residues 242–246 (QANIR). Residue N271 is part of the active site.

This sequence belongs to the thiolase-like superfamily. FabH family. In terms of assembly, homodimer.

It is found in the cytoplasm. It carries out the reaction malonyl-[ACP] + acetyl-CoA + H(+) = 3-oxobutanoyl-[ACP] + CO2 + CoA. It participates in lipid metabolism; fatty acid biosynthesis. Catalyzes the condensation reaction of fatty acid synthesis by the addition to an acyl acceptor of two carbons from malonyl-ACP. Catalyzes the first condensation reaction which initiates fatty acid synthesis and may therefore play a role in governing the total rate of fatty acid production. Possesses both acetoacetyl-ACP synthase and acetyl transacylase activities. Its substrate specificity determines the biosynthesis of branched-chain and/or straight-chain of fatty acids. The chain is Beta-ketoacyl-[acyl-carrier-protein] synthase III from Vesicomyosocius okutanii subsp. Calyptogena okutanii (strain HA).